A 162-amino-acid chain; its full sequence is Large ribosomal subunit protein uL30 (162 aa).

The protein belongs to the universal ribosomal protein uL30 family. Part of the 50S ribosomal subunit.

The sequence is that of Large ribosomal subunit protein uL30 from Korarchaeum cryptofilum (strain OPF8).